Consider the following 427-residue polypeptide: 3-phosphoshikimate 1-carboxyvinyltransferase (427 aa).

Residues Lys22, Ser23, and Arg27 each contribute to the 3-phosphoshikimate site. Residue Lys22 coordinates phosphoenolpyruvate. 2 residues coordinate phosphoenolpyruvate: Gly96 and Arg124. 3-phosphoshikimate is bound by residues Ser169, Ser170, Gln171, Ser197, Asp313, Asn336, and Lys340. A phosphoenolpyruvate-binding site is contributed by Gln171. Asp313 (proton acceptor) is an active-site residue. The phosphoenolpyruvate site is built by Arg344, Arg386, and Lys411.

Belongs to the EPSP synthase family. As to quaternary structure, monomer.

The protein localises to the cytoplasm. The enzyme catalyses 3-phosphoshikimate + phosphoenolpyruvate = 5-O-(1-carboxyvinyl)-3-phosphoshikimate + phosphate. It functions in the pathway metabolic intermediate biosynthesis; chorismate biosynthesis; chorismate from D-erythrose 4-phosphate and phosphoenolpyruvate: step 6/7. Catalyzes the transfer of the enolpyruvyl moiety of phosphoenolpyruvate (PEP) to the 5-hydroxyl of shikimate-3-phosphate (S3P) to produce enolpyruvyl shikimate-3-phosphate and inorganic phosphate. This is 3-phosphoshikimate 1-carboxyvinyltransferase from Shigella dysenteriae.